The chain runs to 279 residues: MDEDETTYPEALRRLLIETPAAIWQLDDESAQCNNCGGPFTWFRRRHHCRWCGKLFCYNCCNSFAKLPVSSVSVDPTEDLIPQDMFIRDPDFLANDNDDDNDSQDSSWINVRVCVNCRQQLSELKELDLPYPITTCLNDDTTTRSNNQVIQSSCGNNLQRIEEPDDFVECPVCYAPLSSFKTLSERESHVANCLSNNSSSPRNMTEFLKHARRYISMQLSETSPCLGQECIICFEEFAAGDRVARIEYCLCIFHLKCYRDWLSTGAAGCPVHAATLHLS.

The FYVE-type zinc-finger motif lies at 27 to 122 (DDESAQCNNC…VCVNCRQQLS (96 aa)). Zn(2+)-binding residues include Cys33, Cys36, Cys49, Cys52, Cys57, Cys60, Cys114, and Cys117. Ser200 carries the post-translational modification Phosphoserine. The RING-type; atypical zinc finger occupies 230–273 (CIICFEEFAAGDRVARIEYCLCIFHLKCYRDWLSTGAAGCPVHA).

Its subcellular location is the cytoplasm. It localises to the nucleus. The protein resides in the endosome membrane. The protein localises to the vacuole membrane. It catalyses the reaction S-ubiquitinyl-[E2 ubiquitin-conjugating enzyme]-L-cysteine + [acceptor protein]-L-lysine = [E2 ubiquitin-conjugating enzyme]-L-cysteine + N(6)-ubiquitinyl-[acceptor protein]-L-lysine.. It functions in the pathway protein modification; protein ubiquitination. Its function is as follows. Functions as an E3 ubiquitin-protein ligase. Binds phospholipid vesicles containing phosphatidylinositol 3-phosphate. In Schizosaccharomyces pombe (strain 972 / ATCC 24843) (Fission yeast), this protein is Putative E3 ubiquitin-protein ligase C36B7.05c.